A 158-amino-acid polypeptide reads, in one-letter code: MAKQKTDPNYKVIAENRRARFDYAIEQDLECGIMLEGSEVKSLRAGGSNIAESYAAVEEGELWLVNSYIAPYEQAKVFKHEERRRRKLLVSRKEMADLWNATQRKGMTLVPLVLYFNHRGMAKIKIGIAKGKKNHDKREAQAKRDWSRQKQRLLKDHG.

The disordered stretch occupies residues 130 to 158 (KGKKNHDKREAQAKRDWSRQKQRLLKDHG). The segment covering 136 to 158 (DKREAQAKRDWSRQKQRLLKDHG) has biased composition (basic and acidic residues).

This sequence belongs to the SmpB family.

Its subcellular location is the cytoplasm. Functionally, required for rescue of stalled ribosomes mediated by trans-translation. Binds to transfer-messenger RNA (tmRNA), required for stable association of tmRNA with ribosomes. tmRNA and SmpB together mimic tRNA shape, replacing the anticodon stem-loop with SmpB. tmRNA is encoded by the ssrA gene; the 2 termini fold to resemble tRNA(Ala) and it encodes a 'tag peptide', a short internal open reading frame. During trans-translation Ala-aminoacylated tmRNA acts like a tRNA, entering the A-site of stalled ribosomes, displacing the stalled mRNA. The ribosome then switches to translate the ORF on the tmRNA; the nascent peptide is terminated with the 'tag peptide' encoded by the tmRNA and targeted for degradation. The ribosome is freed to recommence translation, which seems to be the essential function of trans-translation. In Ruegeria sp. (strain TM1040) (Silicibacter sp.), this protein is SsrA-binding protein.